A 193-amino-acid chain; its full sequence is Chlorate reductase assembly chaperone protein (193 aa).

Belongs to the type II DMSO reductase enzyme chaperone family.

The protein resides in the cytoplasm. Functionally, may function as a system-specific chaperone protein essential for the assembly of an active chlorate reductase ClrABC. This is Chlorate reductase assembly chaperone protein (clrD) from Ideonella dechloratans.